A 72-amino-acid polypeptide reads, in one-letter code: DNA gyrase inhibitor YacG (72 aa).

The Zn(2+) site is built by Cys-7, Cys-10, Cys-26, and Cys-30. The segment at 44 to 72 is disordered; it reads SIAGEEHTPSSDTARPQLSAEDLALLEQD.

It belongs to the DNA gyrase inhibitor YacG family. As to quaternary structure, interacts with GyrB. It depends on Zn(2+) as a cofactor.

Inhibits all the catalytic activities of DNA gyrase by preventing its interaction with DNA. Acts by binding directly to the C-terminal domain of GyrB, which probably disrupts DNA binding by the gyrase. The protein is DNA gyrase inhibitor YacG of Tolumonas auensis (strain DSM 9187 / NBRC 110442 / TA 4).